The following is a 164-amino-acid chain: Cyclic pyranopterin monophosphate synthase (164 aa).

Residues 75-77 (MCH) and 116-117 (ME) contribute to the substrate site. Residue Asp131 is part of the active site.

It belongs to the MoaC family. As to quaternary structure, homohexamer; trimer of dimers.

It carries out the reaction (8S)-3',8-cyclo-7,8-dihydroguanosine 5'-triphosphate = cyclic pyranopterin phosphate + diphosphate. Its pathway is cofactor biosynthesis; molybdopterin biosynthesis. Catalyzes the conversion of (8S)-3',8-cyclo-7,8-dihydroguanosine 5'-triphosphate to cyclic pyranopterin monophosphate (cPMP). In Staphylococcus aureus (strain MSSA476), this protein is Cyclic pyranopterin monophosphate synthase.